Reading from the N-terminus, the 294-residue chain is tRNA pseudouridine synthase B (294 aa).

Asp38 acts as the Nucleophile in catalysis.

It belongs to the pseudouridine synthase TruB family. Type 1 subfamily.

It catalyses the reaction uridine(55) in tRNA = pseudouridine(55) in tRNA. Responsible for synthesis of pseudouridine from uracil-55 in the psi GC loop of transfer RNAs. This Clostridium perfringens (strain SM101 / Type A) protein is tRNA pseudouridine synthase B.